We begin with the raw amino-acid sequence, 875 residues long: Pyrogallol hydroxytransferase large subunit (875 aa).

The tract at residues 82-104 (RKSFDPNGERNPQLRGAGLSKQD) is disordered. Mo-bis(molybdopterin guanine dinucleotide) is bound at residue Ser-175.

This sequence belongs to the prokaryotic molybdopterin-containing oxidoreductase family. In terms of assembly, heterodimer of a large and a small subunit. The cofactor is Mo-bis(molybdopterin guanine dinucleotide).

It catalyses the reaction 1,2,3,5-tetrahydroxybenzene + 1,2,3-trihydroxybenzene = 1,2,3,5-tetrahydroxybenzene + 1,3,5-trihydroxybenzene. Isomerization of pyrogallol to phloroglucin. The protein is Pyrogallol hydroxytransferase large subunit (athL) of Pelobacter acidigallici.